Reading from the N-terminus, the 217-residue chain is Large ribosomal subunit protein uL1 (217 aa).

The protein belongs to the universal ribosomal protein uL1 family. Component of the large ribosomal subunit (LSU). Mature ribosomes consist of a small (40S) and a large (60S) subunit. The 40S subunit contains about 32 different proteins and 1 molecule of RNA (18S). The 60S subunit contains 45 different proteins and 3 molecules of RNA (25S, 5.8S and 5S). uL1 forms part of the L1 stalk.

It localises to the cytoplasm. Its function is as follows. Component of the ribosome, a large ribonucleoprotein complex responsible for the synthesis of proteins in the cell. The small ribosomal subunit (SSU) binds messenger RNAs (mRNAs) and translates the encoded message by selecting cognate aminoacyl-transfer RNA (tRNA) molecules. The large subunit (LSU) contains the ribosomal catalytic site termed the peptidyl transferase center (PTC), which catalyzes the formation of peptide bonds, thereby polymerizing the amino acids delivered by tRNAs into a polypeptide chain. The nascent polypeptides leave the ribosome through a tunnel in the LSU and interact with protein factors that function in enzymatic processing, targeting, and the membrane insertion of nascent chains at the exit of the ribosomal tunnel. uL1 forms part of the L1 stalk, a mobile element that plays a role in evacuating the exit-site tRNA. The protein is Large ribosomal subunit protein uL1 (RPL10A) of Candida albicans (strain SC5314 / ATCC MYA-2876) (Yeast).